The chain runs to 126 residues: UPF0538 protein C2orf76 homolog (126 aa).

The protein belongs to the UPF0538 family.

In Bos taurus (Bovine), this protein is UPF0538 protein C2orf76 homolog.